Here is a 391-residue protein sequence, read N- to C-terminus: Chorismate synthase (391 aa).

Positions 39 and 45 each coordinate NADP(+). FMN-binding positions include 133-135 (RAS), 254-255 (QA), glycine 299, 314-318 (KPIAT), and arginine 340.

The protein belongs to the chorismate synthase family. In terms of assembly, homotetramer. FMNH2 serves as cofactor.

The catalysed reaction is 5-O-(1-carboxyvinyl)-3-phosphoshikimate = chorismate + phosphate. The protein operates within metabolic intermediate biosynthesis; chorismate biosynthesis; chorismate from D-erythrose 4-phosphate and phosphoenolpyruvate: step 7/7. Its function is as follows. Catalyzes the anti-1,4-elimination of the C-3 phosphate and the C-6 proR hydrogen from 5-enolpyruvylshikimate-3-phosphate (EPSP) to yield chorismate, which is the branch point compound that serves as the starting substrate for the three terminal pathways of aromatic amino acid biosynthesis. This reaction introduces a second double bond into the aromatic ring system. The polypeptide is Chorismate synthase (Symbiobacterium thermophilum (strain DSM 24528 / JCM 14929 / IAM 14863 / T)).